Consider the following 1335-residue polypeptide: Mediator of RNA polymerase II transcription subunit 15a (1335 aa).

Disordered regions lie at residues 1-27 (MDNNNWRPSLPNGEPAMDTGDWRTQLP), 109-172 (GTSI…NNNT), 190-225 (QDSSGQHGLSSNMFSGPQRQMLGRPHAMSSQQQQQP), 241-389 (FQSG…QHQQ), 401-448 (IQQQ…TQSN), 496-525 (LYSSQGQQSQNQPSQQQMMPQLQSHHQQLG), 567-591 (SQRTLPEMPSSSLDSTAQTESANGG), and 683-815 (HRPR…QSNV). 3 stretches are compositionally biased toward polar residues: residues 110–158 (TSID…TALP), 190–207 (QDSSGQHGLSSNMFSGPQ), and 241–257 (FQSGNVPNPNSLLPSHI). Over residues 258–270 (QQQQQNVLQPNQL) the composition is skewed to low complexity. Residues 271–299 (HSSQQPGVPTSATQPSTVNSAPLQGLHTN) are compositionally biased toward polar residues. A compositionally biased stretch (low complexity) spans 300 to 314 (QQSSPQLSSQQTTQS). Residues 315–328 (MLRQHQSSMLRQHP) show a composition bias toward polar residues. The segment covering 329-362 (QSQQASGIHQQQSSLPQQSISPLQQQPTQLMRQQ) has biased composition (low complexity). Residues 363–374 (AANSSGIQQKQM) are compositionally biased toward polar residues. Over residues 401–436 (IQQQQSQQQPLQQPQQQQKQQPPAQQQLMSQQNSLQ) the composition is skewed to low complexity. Residues 437–448 (ATHQNPLGTQSN) show a composition bias toward polar residues. The span at 498–525 (SSQGQQSQNQPSQQQMMPQLQSHHQQLG) shows a compositional bias: low complexity. Over residues 567–588 (SQRTLPEMPSSSLDSTAQTESA) the composition is skewed to polar residues. Low complexity predominate over residues 688–712 (PVQQGQLPQSQMQPMQQPQSQTVQD). Polar residues-rich tracts occupy residues 716-728 (DNQTNPQMQSMSM), 735-749 (AQQSSMTNMQSNVLS), and 756-815 (APQQ…QSNV). A coiled-coil region spans residues 834 to 882 (QDQQMQLKQQFQQRQMQQQQLQARQQQQQQQLQARQQAAQLQQMNDMND). Disordered regions lie at residues 947-986 (KMGTPLQPANSPFVVPSPSSTPLAPSPMQVDSEKPGSSSL) and 1146-1165 (FAGSETSDLESTATSDGKKA). The span at 957 to 973 (SPFVVPSPSSTPLAPSP) shows a compositional bias: low complexity. Polar residues predominate over residues 1148–1160 (GSETSDLESTATS).

This sequence belongs to the plant Mediator complex subunit 15 family. Component of the Mediator complex.

It localises to the nucleus. Its function is as follows. Component of the Mediator complex, a coactivator involved in the regulated transcription of nearly all RNA polymerase II-dependent genes. Mediator functions as a bridge to convey information from gene-specific regulatory proteins to the basal RNA polymerase II transcription machinery. The Mediator complex, having a compact conformation in its free form, is recruited to promoters by direct interactions with regulatory proteins and serves for the assembly of a functional preinitiation complex with RNA polymerase II and the general transcription factors. This is Mediator of RNA polymerase II transcription subunit 15a (MED15A) from Arabidopsis thaliana (Mouse-ear cress).